The chain runs to 142 residues: Large ribosomal subunit protein uL13 (142 aa).

The protein belongs to the universal ribosomal protein uL13 family. As to quaternary structure, part of the 50S ribosomal subunit.

This protein is one of the early assembly proteins of the 50S ribosomal subunit, although it is not seen to bind rRNA by itself. It is important during the early stages of 50S assembly. This Pseudomonas paraeruginosa (strain DSM 24068 / PA7) (Pseudomonas aeruginosa (strain PA7)) protein is Large ribosomal subunit protein uL13.